The sequence spans 250 residues: Triosephosphate isomerase, glycosomal (250 aa).

Substrate contacts are provided by Asn11 and Lys13. His95 functions as the Electrophile in the catalytic mechanism. Glu167 functions as the Proton acceptor in the catalytic mechanism.

The protein belongs to the triosephosphate isomerase family. In terms of assembly, homodimer.

It is found in the glycosome. It catalyses the reaction D-glyceraldehyde 3-phosphate = dihydroxyacetone phosphate. Its pathway is carbohydrate biosynthesis; gluconeogenesis. It functions in the pathway carbohydrate degradation; glycolysis; D-glyceraldehyde 3-phosphate from glycerone phosphate: step 1/1. This chain is Triosephosphate isomerase, glycosomal, found in Trypanosoma brucei brucei.